A 312-amino-acid polypeptide reads, in one-letter code: Small ribosomal subunit biogenesis GTPase RsgA (312 aa).

The CP-type G domain maps to 86-245 (QSFLKRPAVA…LADTPGFNRP (160 aa)). GTP-binding positions include 135-138 (TKID) and 187-195 (GPSGVGKTS). The Zn(2+) site is built by Cys270, Cys275, His277, and Cys283.

This sequence belongs to the TRAFAC class YlqF/YawG GTPase family. RsgA subfamily. Monomer. Associates with 30S ribosomal subunit, binds 16S rRNA. Requires Zn(2+) as cofactor.

It is found in the cytoplasm. Functionally, one of several proteins that assist in the late maturation steps of the functional core of the 30S ribosomal subunit. Helps release RbfA from mature subunits. May play a role in the assembly of ribosomal proteins into the subunit. Circularly permuted GTPase that catalyzes slow GTP hydrolysis, GTPase activity is stimulated by the 30S ribosomal subunit. In Prochlorococcus marinus (strain NATL1A), this protein is Small ribosomal subunit biogenesis GTPase RsgA.